Reading from the N-terminus, the 223-residue chain is MDELKKLAGVTAAKYVKNGMIVGLGTGSTAYFFVEEIGRRVKEEGLQVVGVTTSNRTTEQARGLAIPLKSADDIDVIDVTVDGADEVDPDFNGIKGGGGALLMEKIVATPTKEYIWVVDESKLVETLGAFKLPVEVVRYGSERLFRVFKSKGYCPSFRETEGDRFITDMGNYIIDLDLKKIEDPKQLANELDHTVGVVEHGLFNGMVNKVIVAGKNGLDILEK.

Residues 26 to 29 (TGST), 82 to 85 (DGAD), and 95 to 98 (KGGG) contribute to the substrate site. Glu104 serves as the catalytic Proton acceptor. Position 122 (Lys122) interacts with substrate.

It belongs to the ribose 5-phosphate isomerase family. In terms of assembly, homodimer.

It carries out the reaction aldehydo-D-ribose 5-phosphate = D-ribulose 5-phosphate. The protein operates within carbohydrate degradation; pentose phosphate pathway; D-ribose 5-phosphate from D-ribulose 5-phosphate (non-oxidative stage): step 1/1. Functionally, catalyzes the reversible conversion of ribose-5-phosphate to ribulose 5-phosphate. The protein is Ribose-5-phosphate isomerase A of Streptococcus agalactiae serotype Ia (strain ATCC 27591 / A909 / CDC SS700).